We begin with the raw amino-acid sequence, 161 residues long: MORN repeat-containing protein 5 (161 aa).

3 MORN repeats span residues 8–30 (YIGE…TETI), 31–53 (YVGE…SGSQ), and 54–75 (YDAI…DGLH).

In terms of tissue distribution, expressed in sperm (at protein level).

It is found in the cell projection. Its subcellular location is the cilium. It localises to the flagellum. The sequence is that of MORN repeat-containing protein 5 (MORN5) from Homo sapiens (Human).